A 67-amino-acid chain; its full sequence is UPF0337 protein Atu4724 (67 aa).

The protein belongs to the UPF0337 (CsbD) family.

In Agrobacterium fabrum (strain C58 / ATCC 33970) (Agrobacterium tumefaciens (strain C58)), this protein is UPF0337 protein Atu4724.